A 121-amino-acid chain; its full sequence is Small ribosomal subunit protein bS6 (121 aa).

This sequence belongs to the bacterial ribosomal protein bS6 family.

In terms of biological role, binds together with bS18 to 16S ribosomal RNA. The sequence is that of Small ribosomal subunit protein bS6 (rpsF) from Rickettsia prowazekii (strain Madrid E).